A 1426-amino-acid chain; its full sequence is ABC transporter G family member 31 (1426 aa).

Residues leucine 142–glutamate 415 enclose the ABC transporter 1 domain. Glycine 175–threonine 182 serves as a coordination point for ATP. The 214-residue stretch at glutamate 493–phenylalanine 706 folds into the ABC transmembrane type-2 1 domain. The next 7 helical transmembrane spans lie at phenylalanine 511–phenylalanine 531, glycine 544–threonine 564, leucine 592–valine 612, phenylalanine 630–leucine 650, isoleucine 655–isoleucine 675, isoleucine 681–isoleucine 701, and isoleucine 741–leucine 761. The region spanning methionine 824–proline 1076 is the ABC transporter 2 domain. Position 869 to 876 (glycine 869 to threonine 876) interacts with ATP. Positions alanine 1149–phenylalanine 1363 constitute an ABC transmembrane type-2 2 domain. Transmembrane regions (helical) follow at residues tyrosine 1168–tryptophan 1188, isoleucine 1200–threonine 1220, leucine 1245–isoleucine 1265, phenylalanine 1283–methionine 1303, valine 1313–isoleucine 1333, tryptophan 1341–phenylalanine 1363, and valine 1398–isoleucine 1418.

It belongs to the ABC transporter superfamily. ABCG family. PDR (TC 3.A.1.205) subfamily.

The protein resides in the membrane. May be a general defense protein. In Oryza sativa subsp. japonica (Rice), this protein is ABC transporter G family member 31.